Here is a 655-residue protein sequence, read N- to C-terminus: MGIFSIANQHIRFAVKLATAIVLALFVGFHFQLETPRWAVLTAAIVAAGPAFAAGGEPYSGAIRYRGFLRIIGTFIGCIAGLVIIIAMIRAPLLMILVCCIWAGFCTWISSLVRIENSYAWGLAGYTALIIVITIQPEPLLTPQFAVERCSEIVIGIVCAIMADLLFSPRSIKQEVDRELESLLVAQYQLMQLCIKHGDGEVVDKAWGDLVRRTTALQGMRSNLNMESSRWARANRRLKAINTLSLTLITQSCETYLIQNTRPELITDTFREFFDTPVETAQDVHKQLKRLRRVIAWTGERETPVTIYSWVAAATRYQLLKRGVISNTKINATEEEILQGELEVKVESAERHHAMVNFWRTTLSCILGTLFWLWTGWTSGSGVMVMIAVVTSLAMRLPNPRMVAIDFIYGTLAALPLGLLYFLVIIPNTQQSMLLLCISLAVLGFFLGIEVQKRRLGSMGALASTINIIVPDNPMTFHFSQFLDSALGQIVGCVLAFTVILLVRDKSRDRTGRVLLNQFVSAAVSAMTTNVARRKENHLPALYQQLFLLINKFPGDLPKFRLALTMIIAHQRLRDAPIPVNEDLSAFHRQMRRTADHVISARSDDKRRRYFGQLLEELEIYQEKLRIWQAPPQVTEPVHRLAGMLHKYQHALTDS.

Helical transmembrane passes span 13–33 (FAVK…HFQL), 38–58 (WAVL…GGEP), 69–89 (LRII…IAMI), 93–113 (LLMI…SSLV), 121–141 (WGLA…EPLL), 152–172 (EIVI…PRSI), 370–390 (LFWL…IAVV), 407–427 (FIYG…VIIP), 431–451 (QSML…GIEV), and 482–502 (FLDS…VILL).

Belongs to the aromatic acid exporter ArAE (TC 2.A.85) family.

It localises to the cell inner membrane. Its function is as follows. Forms an efflux pump with AaeA. Could function as a metabolic relief valve, allowing to eliminate certain compounds when they accumulate to high levels in the cell. This is p-hydroxybenzoic acid efflux pump subunit AaeB from Shigella dysenteriae serotype 1 (strain Sd197).